We begin with the raw amino-acid sequence, 191 residues long: UPF0312 protein Sden_2128 (191 aa).

A signal peptide spans 1–22 (MKKHLLASLLGASLLLPTAVNA).

This sequence belongs to the UPF0312 family. Type 1 subfamily.

The protein resides in the periplasm. This is UPF0312 protein Sden_2128 from Shewanella denitrificans (strain OS217 / ATCC BAA-1090 / DSM 15013).